A 130-amino-acid chain; its full sequence is Small ribosomal subunit protein uS11c (130 aa).

This sequence belongs to the universal ribosomal protein uS11 family. Part of the 30S ribosomal subunit.

The protein localises to the plastid. It localises to the chloroplast. The polypeptide is Small ribosomal subunit protein uS11c (Pinus koraiensis (Korean pine)).